The chain runs to 553 residues: Adenine deaminase 1 (553 aa).

Belongs to the metallo-dependent hydrolases superfamily. Adenine deaminase family. Requires Mn(2+) as cofactor.

The catalysed reaction is adenine + H2O + H(+) = hypoxanthine + NH4(+). The sequence is that of Adenine deaminase 1 from Oenococcus oeni (strain ATCC BAA-331 / PSU-1).